The primary structure comprises 247 residues: uncharacterized protein (247 aa).

This is an uncharacterized protein from Acidianus bottle-shaped virus (isolate Italy/Pozzuoli) (ABV).